Reading from the N-terminus, the 176-residue chain is Ribosome maturation factor RimP (176 aa).

Residues 143 to 176 (LKPQTAKKKGRQEETEDMTLELDAVSRAVPEAEI) form a disordered region.

This sequence belongs to the RimP family.

It localises to the cytoplasm. Its function is as follows. Required for maturation of 30S ribosomal subunits. The sequence is that of Ribosome maturation factor RimP from Chlorobium luteolum (strain DSM 273 / BCRC 81028 / 2530) (Pelodictyon luteolum).